The sequence spans 439 residues: Ribosomal protein uS12 methylthiotransferase RimO (439 aa).

The MTTase N-terminal domain maps to 7 to 119 (KQLCLISLGC…IDIMIAKKQN (113 aa)). 6 residues coordinate [4Fe-4S] cluster: C16, C50, C82, C151, C155, and C158. In terms of domain architecture, Radical SAM core spans 137–368 (TGSSVHAYVK…ALKHQNHSFK (232 aa)).

The protein belongs to the methylthiotransferase family. RimO subfamily. The cofactor is [4Fe-4S] cluster.

It is found in the cytoplasm. The catalysed reaction is L-aspartate(89)-[ribosomal protein uS12]-hydrogen + (sulfur carrier)-SH + AH2 + 2 S-adenosyl-L-methionine = 3-methylsulfanyl-L-aspartate(89)-[ribosomal protein uS12]-hydrogen + (sulfur carrier)-H + 5'-deoxyadenosine + L-methionine + A + S-adenosyl-L-homocysteine + 2 H(+). Its function is as follows. Catalyzes the methylthiolation of an aspartic acid residue of ribosomal protein uS12. The chain is Ribosomal protein uS12 methylthiotransferase RimO from Helicobacter pylori (strain ATCC 700392 / 26695) (Campylobacter pylori).